A 314-amino-acid polypeptide reads, in one-letter code: (+)-neomenthol dehydrogenase (314 aa).

13-36 lines the NADP(+) pocket; the sequence is VTGGNKGIGYETCRQLASKGVVVV. Residue Ser-183 participates in substrate binding. Tyr-239 serves as the catalytic Proton acceptor.

Belongs to the short-chain dehydrogenases/reductases (SDR) family. As to quaternary structure, monomer. As to expression, expressed in flowers and red fruit tissues. Not detected in leaves, stems, roots or green fruits.

It catalyses the reaction (+)-neomenthol + NADP(+) = (1R,4S)-menthone + NADPH + H(+). Functionally, involved in basal resistance against pathogens. This is (+)-neomenthol dehydrogenase (MNR1) from Capsicum annuum (Capsicum pepper).